The primary structure comprises 250 residues: Cell division protein ZapD (250 aa).

Belongs to the ZapD family. As to quaternary structure, interacts with FtsZ.

It localises to the cytoplasm. Cell division factor that enhances FtsZ-ring assembly. Directly interacts with FtsZ and promotes bundling of FtsZ protofilaments, with a reduction in FtsZ GTPase activity. The chain is Cell division protein ZapD from Yersinia pseudotuberculosis serotype O:1b (strain IP 31758).